The primary structure comprises 368 residues: tRNA-specific 2-thiouridylase MnmA (368 aa).

Residues 11 to 18 (GMSGGVDS) and Met-37 each bind ATP. Residues 97 to 99 (NPD) form an interaction with target base in tRNA region. The active-site Nucleophile is Cys-102. Cys-102 and Cys-199 are joined by a disulfide. Gly-127 provides a ligand contact to ATP. An interaction with tRNA region spans residues 149–151 (KDQ). Cys-199 acts as the Cysteine persulfide intermediate in catalysis. Positions 311 to 312 (RY) are interaction with tRNA.

Belongs to the MnmA/TRMU family. As to quaternary structure, interacts with TusE.

It localises to the cytoplasm. The catalysed reaction is S-sulfanyl-L-cysteinyl-[protein] + uridine(34) in tRNA + AH2 + ATP = 2-thiouridine(34) in tRNA + L-cysteinyl-[protein] + A + AMP + diphosphate + H(+). Functionally, catalyzes the 2-thiolation of uridine at the wobble position (U34) of tRNA(Lys), tRNA(Glu) and tRNA(Gln), leading to the formation of s(2)U34, the first step of tRNA-mnm(5)s(2)U34 synthesis. Sulfur is provided by IscS, via a sulfur-relay system. Binds ATP and its substrate tRNAs. This chain is tRNA-specific 2-thiouridylase MnmA, found in Citrobacter koseri (strain ATCC BAA-895 / CDC 4225-83 / SGSC4696).